The following is a 300-amino-acid chain: NAD kinase (300 aa).

Asp-75 (proton acceptor) is an active-site residue. NAD(+)-binding positions include 75-76 (DG), 149-150 (ND), Arg-177, Asp-179, 190-195 (TAYALS), Ala-214, and Gln-248.

Belongs to the NAD kinase family. Requires a divalent metal cation as cofactor.

Its subcellular location is the cytoplasm. The enzyme catalyses NAD(+) + ATP = ADP + NADP(+) + H(+). Functionally, involved in the regulation of the intracellular balance of NAD and NADP, and is a key enzyme in the biosynthesis of NADP. Catalyzes specifically the phosphorylation on 2'-hydroxyl of the adenosine moiety of NAD to yield NADP. In Burkholderia pseudomallei (strain K96243), this protein is NAD kinase.